The primary structure comprises 267 residues: NAD(P)H-hydrate epimerase (267 aa).

In terms of domain architecture, YjeF N-terminal spans 27-242; it reads AQKIDEDLMS…DLEAKFDLQL (216 aa). Residue 78-82 coordinates (6S)-NADPHX; sequence NQGGD. Gln79 and Asp142 together coordinate K(+). (6S)-NADPHX contacts are provided by residues 146–152 and Asp185; that span reads GFNFKGD. Residue Ser188 coordinates K(+).

This sequence belongs to the NnrE/AIBP family. K(+) serves as cofactor.

Its subcellular location is the cytoplasm. It localises to the mitochondrion. It catalyses the reaction (6R)-NADHX = (6S)-NADHX. It carries out the reaction (6R)-NADPHX = (6S)-NADPHX. Functionally, catalyzes the epimerization of the S- and R-forms of NAD(P)HX, a damaged form of NAD(P)H that is a result of enzymatic or heat-dependent hydration. This is a prerequisite for the S-specific NAD(P)H-hydrate dehydratase to allow the repair of both epimers of NAD(P)HX. The chain is NAD(P)H-hydrate epimerase from Mycosarcoma maydis (Corn smut fungus).